The chain runs to 435 residues: uncharacterized protein (435 aa).

Residues 7–58 (PFPITKLPLVPRCKILKFFDYGDLLDISLCSKRMAQTVRDIHITADLHYLTL) form the F-box domain.

This is an uncharacterized protein from Caenorhabditis elegans.